The following is a 485-amino-acid chain: Hexokinase-1 (485 aa).

Positions 21–468 (KELMDEIHQL…SGAGAAVIAA (448 aa)) constitute a Hexokinase domain. A hexokinase small subdomain region spans residues 75 to 209 (TGKESGNYLA…ELPIEIVALI (135 aa)). ATP contacts are provided by residues 86 to 91 (DLGGTN) and Lys-111. Substrate is bound by residues Ser-158, 175 to 176 (TK), 210 to 211 (ND), and Asn-237. The interval 210–457 (NDTVGTLIAS…DPITIVPAED (248 aa)) is hexokinase large subdomain. Residue Ser-245 is modified to Phosphoserine. Glu-269 is a binding site for substrate. Ser-272 bears the Phosphoserine mark. Glu-302 serves as a coordination point for substrate. Residues 307–308 (GY), 344–348 (TSYPA), and 419–423 (SVYNK) each bind ATP.

This sequence belongs to the hexokinase family. As to quaternary structure, homodimer.

The catalysed reaction is a D-hexose + ATP = a D-hexose 6-phosphate + ADP + H(+). It catalyses the reaction D-fructose + ATP = D-fructose 6-phosphate + ADP + H(+). It carries out the reaction D-glucose + ATP = D-glucose 6-phosphate + ADP + H(+). It functions in the pathway carbohydrate metabolism; hexose metabolism. It participates in carbohydrate degradation; glycolysis; D-glyceraldehyde 3-phosphate and glycerone phosphate from D-glucose: step 1/4. Subject to allosteric control. Substrate inhibition by ATP. Functionally, catalyzes the phosphorylation of hexose, such as D-glucose and D-fructose, to hexose 6-phosphate (D-glucose 6-phosphate and D-fructose 6-phosphate, respectively). Mediates the initial step of glycolysis by catalyzing phosphorylation of D-glucose to D-glucose 6-phosphate. The chain is Hexokinase-1 (HXK1) from Saccharomyces cerevisiae (strain ATCC 204508 / S288c) (Baker's yeast).